Consider the following 956-residue polypeptide: Glycine dehydrogenase (decarboxylating) (956 aa).

At Lys-697 the chain carries N6-(pyridoxal phosphate)lysine.

Belongs to the GcvP family. The glycine cleavage system is composed of four proteins: P, T, L and H. The cofactor is pyridoxal 5'-phosphate.

It catalyses the reaction N(6)-[(R)-lipoyl]-L-lysyl-[glycine-cleavage complex H protein] + glycine + H(+) = N(6)-[(R)-S(8)-aminomethyldihydrolipoyl]-L-lysyl-[glycine-cleavage complex H protein] + CO2. The glycine cleavage system catalyzes the degradation of glycine. The P protein binds the alpha-amino group of glycine through its pyridoxal phosphate cofactor; CO(2) is released and the remaining methylamine moiety is then transferred to the lipoamide cofactor of the H protein. This Cereibacter sphaeroides (strain KD131 / KCTC 12085) (Rhodobacter sphaeroides) protein is Glycine dehydrogenase (decarboxylating).